The sequence spans 246 residues: Nodulation protein G (246 aa).

Residue 8–32 (VTGAMGGLGTAICQALAKDGCIVAA) participates in NAD(+) binding. S140 contributes to the substrate binding site. Y153 functions as the Proton acceptor in the catalytic mechanism.

The protein belongs to the short-chain dehydrogenases/reductases (SDR) family.

Its function is as follows. Proposed to modify Nod factor fatty acyl chain. The chain is Nodulation protein G (nodG) from Azospirillum brasilense.